The chain runs to 106 residues: Urease subunit beta (106 aa).

The protein belongs to the urease beta subunit family. As to quaternary structure, heterotrimer of UreA (gamma), UreB (beta) and UreC (alpha) subunits. Three heterotrimers associate to form the active enzyme.

It localises to the cytoplasm. The enzyme catalyses urea + 2 H2O + H(+) = hydrogencarbonate + 2 NH4(+). It functions in the pathway nitrogen metabolism; urea degradation; CO(2) and NH(3) from urea (urease route): step 1/1. This Citrobacter koseri (strain ATCC BAA-895 / CDC 4225-83 / SGSC4696) protein is Urease subunit beta.